We begin with the raw amino-acid sequence, 218 residues long: Histone H1 (218 aa).

Over residues methionine 1–alanine 19 the composition is skewed to low complexity. Disordered stretches follow at residues methionine 1–threonine 42 and valine 89–lysine 218. At serine 2 the chain carries N-acetylserine. The 74-residue stretch at alanine 37–lysine 110 folds into the H15 domain. Composition is skewed to basic residues over residues lysine 118–alanine 133, lysine 141–lysine 158, lysine 166–alanine 184, and lysine 191–lysine 218.

This sequence belongs to the histone H1/H5 family.

It localises to the nucleus. It is found in the chromosome. In terms of biological role, histones H1 are necessary for the condensation of nucleosome chains into higher-order structures. The chain is Histone H1 from Gallus gallus (Chicken).